The primary structure comprises 443 residues: ATP-dependent protease ATPase subunit HslU (443 aa).

ATP is bound by residues I20, 62–67 (GVGKTE), D255, E321, and R393.

Belongs to the ClpX chaperone family. HslU subfamily. As to quaternary structure, a double ring-shaped homohexamer of HslV is capped on each side by a ring-shaped HslU homohexamer. The assembly of the HslU/HslV complex is dependent on binding of ATP.

The protein resides in the cytoplasm. Functionally, ATPase subunit of a proteasome-like degradation complex; this subunit has chaperone activity. The binding of ATP and its subsequent hydrolysis by HslU are essential for unfolding of protein substrates subsequently hydrolyzed by HslV. HslU recognizes the N-terminal part of its protein substrates and unfolds these before they are guided to HslV for hydrolysis. The polypeptide is ATP-dependent protease ATPase subunit HslU (Helicobacter pylori (strain ATCC 700392 / 26695) (Campylobacter pylori)).